The chain runs to 196 residues: ATP-dependent Clp protease proteolytic subunit (196 aa).

The active-site Nucleophile is Ser-101. Residue His-126 is part of the active site.

Belongs to the peptidase S14 family. As to quaternary structure, component of the chloroplastic Clp protease core complex.

The protein localises to the plastid. It localises to the chloroplast stroma. The enzyme catalyses Hydrolysis of proteins to small peptides in the presence of ATP and magnesium. alpha-casein is the usual test substrate. In the absence of ATP, only oligopeptides shorter than five residues are hydrolyzed (such as succinyl-Leu-Tyr-|-NHMec, and Leu-Tyr-Leu-|-Tyr-Trp, in which cleavage of the -Tyr-|-Leu- and -Tyr-|-Trp bonds also occurs).. In terms of biological role, cleaves peptides in various proteins in a process that requires ATP hydrolysis. Has a chymotrypsin-like activity. Plays a major role in the degradation of misfolded proteins. The chain is ATP-dependent Clp protease proteolytic subunit from Aethionema cordifolium (Lebanon stonecress).